The primary structure comprises 202 residues: Syndecan-4 (202 aa).

Residues 1-23 form the signal peptide; the sequence is MAPVCLFAPLLLLLLGGFPVAPG. The Extracellular portion of the chain corresponds to 24 to 149; it reads ESIRETEVID…QGSNIFERTE (126 aa). Disordered stretches follow at residues 42–76 and 89–138; these read YFSGALPDDEDAGGLEQDSDFELSGSGDLDDTEEP and LDNH…MSST. Ser-44 carries an O-linked (Xyl...) (glycosaminoglycan) serine glycan. A compositionally biased stretch (acidic residues) spans 48-62; sequence PDDEDAGGLEQDSDF. Residues Ser-65 and Ser-67 are each glycosylated (O-linked (Xyl...) (glycosaminoglycan) serine). A compositionally biased stretch (basic and acidic residues) spans 105-121; that stretch reads SEPKELEENEVIPKRVP. A helical transmembrane segment spans residues 150-174; that stretch reads VLAALIVGGVVGILFAVFLILLLVY. The Cytoplasmic portion of the chain corresponds to 175 to 202; that stretch reads RMKKKDEGSYDLGKKPIYKKAPTNEFYA.

This sequence belongs to the syndecan proteoglycan family. As to quaternary structure, homodimer. Interacts with CDCP1 and SDCBP. Interacts (via its cytoplasmic domain) with GIPC (via its PDZ domain). Interacts (via its cytoplasmic domain) with NUDT16L1. Interacts with DNM2; this interaction is markedly enhanced at focal ahesion site upon induction of focal adhesions and stress-fiber formation. Post-translationally, shedding is enhanced by a number of factors such as heparanase, thrombin or EGF. Also by stress and wound healing. PMA-mediated shedding is inhibited by TIMP3. O-glycosylated; contains both chondroitin sulfate and heparan sulfate. Ser-44, Ser-65 and Ser-67 can all be modified by either chondroitin sulfate or heparan sulfate, and the protein exists in forms that contain only chondroitin sulfate, only heparan sulfate and both chondroitin sulfate and heparan sulfate.

It localises to the membrane. It is found in the secreted. Functionally, cell surface proteoglycan which regulates exosome biogenesis in concert with SDCBP and PDCD6IP. This Rattus norvegicus (Rat) protein is Syndecan-4.